The sequence spans 180 residues: Calcium-binding protein E (180 aa).

EF-hand domains follow at residues 3 to 38 (KVEA…NSNI), 40 to 76 (DPLA…KKIK), 85 to 120 (ALRS…DPDF), and 139 to 174 (RAKS…HPEF). Ca(2+) is bound by residues Asp16, Asp18, Asp20, Asn22, and Glu27. Ca(2+) is bound by residues Asp98, Asp100, Asp102, Glu109, Asp152, Asp154, Asn156, Lys158, and Glu163.

In Dictyostelium discoideum (Social amoeba), this protein is Calcium-binding protein E (cbpE).